Here is a 91-residue protein sequence, read N- to C-terminus: Small ribosomal subunit protein bS16 (91 aa).

Belongs to the bacterial ribosomal protein bS16 family.

The sequence is that of Small ribosomal subunit protein bS16 from Latilactobacillus sakei subsp. sakei (strain 23K) (Lactobacillus sakei subsp. sakei).